We begin with the raw amino-acid sequence, 419 residues long: Creatine kinase S-type, mitochondrial (419 aa).

Residues 1–39 constitute a mitochondrion transit peptide; sequence MASIFSKLLTGRNASLLFATMGTSVLTTGYLLNRQKVCA. Positions 40 to 64 are cardiolipin-binding; the sequence is EVREQPRLFPPSADYPDLRKHNNCM. A Phosphagen kinase N-terminal domain is found at 46–132; it reads RLFPPSADYP…FDPVIKLRHN (87 aa). The Phosphagen kinase C-terminal domain maps to 159–401; it reads YVLSSRVRTG…NYLVDCEKKL (243 aa). Residues 162 to 166 and H225 each bind ATP; that span reads SSRVR. Residue Y255 is modified to Phosphotyrosine. Residues R270, R326, 354-359, and D369 contribute to the ATP site; that span reads RGTGGV. The residue at position 356 (T356) is a Phosphothreonine.

This sequence belongs to the ATP:guanido phosphotransferase family. In terms of assembly, exists as an octamer composed of four CKMT2 homodimers. As to expression, sarcomere-specific. Found only in heart and skeletal muscles.

The protein resides in the mitochondrion inner membrane. It catalyses the reaction creatine + ATP = N-phosphocreatine + ADP + H(+). Functionally, reversibly catalyzes the transfer of phosphate between ATP and various phosphogens (e.g. creatine phosphate). Creatine kinase isoenzymes play a central role in energy transduction in tissues with large, fluctuating energy demands, such as skeletal muscle, heart, brain and spermatozoa. This is Creatine kinase S-type, mitochondrial (CKMT2) from Homo sapiens (Human).